The following is a 79-amino-acid chain: Defensin-like protein 3 (79 aa).

An N-terminal signal peptide occupies residues 1–29; the sequence is MAKFASIITLLFAALVVFAAFEAPTMVEA. 4 cysteine pairs are disulfide-bonded: C32/C79, C43/C64, C49/C73, and C53/C75.

Belongs to the DEFL family.

The protein localises to the secreted. Functionally, possesses antifungal activity sensitive to inorganic cations. The polypeptide is Defensin-like protein 3 (AFP3) (Brassica napus (Rape)).